The following is a 146-amino-acid chain: Mediator of RNA polymerase II transcription subunit 10 (146 aa).

Belongs to the Mediator complex subunit 10 family. In terms of assembly, component of the Mediator complex.

The protein resides in the nucleus. Component of the Mediator complex, a coactivator involved in the regulated transcription of nearly all RNA polymerase II-dependent genes. Mediator functions as a bridge to convey information from gene-specific regulatory proteins to the basal RNA polymerase II transcription machinery. Mediator is recruited to promoters by direct interactions with regulatory proteins and serves as a scaffold for the assembly of a functional preinitiation complex with RNA polymerase II and the general transcription factors. The protein is Mediator of RNA polymerase II transcription subunit 10 (NUT2) of Scheffersomyces stipitis (strain ATCC 58785 / CBS 6054 / NBRC 10063 / NRRL Y-11545) (Yeast).